A 431-amino-acid chain; its full sequence is Adenylosuccinate synthetase (431 aa).

GTP is bound by residues 13–19 (GDEGKGK) and 41–43 (GHT). The active-site Proton acceptor is D14. The Mg(2+) site is built by D14 and G41. IMP is bound by residues 14–17 (DEGK), 39–42 (NAGH), T130, R144, Q225, T240, and R304. H42 acts as the Proton donor in catalysis. Position 300-306 (300-306 (SVTGRPR)) interacts with substrate. GTP contacts are provided by residues R306, 332-334 (KLD), and 414-416 (STG).

The protein belongs to the adenylosuccinate synthetase family. In terms of assembly, homodimer. The cofactor is Mg(2+).

The protein resides in the cytoplasm. The enzyme catalyses IMP + L-aspartate + GTP = N(6)-(1,2-dicarboxyethyl)-AMP + GDP + phosphate + 2 H(+). The protein operates within purine metabolism; AMP biosynthesis via de novo pathway; AMP from IMP: step 1/2. Plays an important role in the de novo pathway of purine nucleotide biosynthesis. Catalyzes the first committed step in the biosynthesis of AMP from IMP. This Bordetella petrii (strain ATCC BAA-461 / DSM 12804 / CCUG 43448) protein is Adenylosuccinate synthetase.